The following is a 192-amino-acid chain: Probable apo-citrate lyase phosphoribosyl-dephospho-CoA transferase (192 aa).

It belongs to the CitX family.

It catalyses the reaction apo-[citrate lyase ACP] + 2'-(5''-triphospho-alpha-D-ribosyl)-3'-dephospho-CoA = holo-[citrate lyase ACP] + diphosphate. In terms of biological role, transfers 2-(5''-triphosphoribosyl)-3'-dephosphocoenzyme-A on a serine residue to the apo-acyl carrier protein (gamma chain) of the citrate lyase to yield holo-acyl carrier protein. The sequence is that of Probable apo-citrate lyase phosphoribosyl-dephospho-CoA transferase from Streptococcus pyogenes serotype M18 (strain MGAS8232).